Consider the following 262-residue polypeptide: TLC domain-containing protein 4-B (262 aa).

6 consecutive transmembrane segments (helical) span residues 6–26 (PLTVFISVTSLAVFQFLFHVG), 53–73 (TVSSFHALVVGCFCLYILVYD), 90–110 (LNVAVTSGYLISDLLLIIYYW), 122–142 (HLAALYACYYVLGEGMLPYFG), 177–197 (GVLMTISFFIVRIAVIPIYYG), and 218–238 (AWIISSVSLDIMNVMWMIKIA). Residues 44–246 (RQKIEWNSRT…IAKGCYKVLY (203 aa)) form the TLC domain.

Belongs to the TLCD4 family.

The protein localises to the membrane. This Xenopus laevis (African clawed frog) protein is TLC domain-containing protein 4-B (tlcd4-b).